A 91-amino-acid polypeptide reads, in one-letter code: HssA/B-like protein 52 (91 aa).

Disordered stretches follow at residues Met1–Ser20 and Gly72–Ile91.

The protein belongs to the hssA/B family.

In Dictyostelium discoideum (Social amoeba), this protein is HssA/B-like protein 52 (hssl52).